We begin with the raw amino-acid sequence, 507 residues long: uncharacterized protein (507 aa).

Disordered stretches follow at residues 91 to 162 (NEKT…KKLL), 174 to 255 (EKLQ…QQQQ), and 309 to 422 (KRKL…NYST). Acidic residues predominate over residues 116–143 (DSSESDSSESESDSSESESESESNETSE). Positions 144-155 (NESSSSSEPESS) are enriched in low complexity. A compositionally biased stretch (basic and acidic residues) spans 174 to 193 (EKLQQEQQKQKEAQKPKEKP). 3 stretches are compositionally biased toward low complexity: residues 194–236 (QQQQ…QQIE), 243–255 (PQQQ…QQQQ), and 313–350 (QSQL…TNKP). The segment covering 351–360 (LSKRQKKLLK) has biased composition (basic residues). Residues 378–409 (NNKNDNSTNDSNNNNDNNNNNKNDTNDSNNDD) are compositionally biased toward low complexity.

This is an uncharacterized protein from Dictyostelium discoideum (Social amoeba).